The chain runs to 204 residues: Thymidylate kinase (204 aa).

Residue 7-14 (GGEGVGKT) coordinates ATP.

It belongs to the thymidylate kinase family.

It catalyses the reaction dTMP + ATP = dTDP + ADP. In terms of biological role, phosphorylation of dTMP to form dTDP in both de novo and salvage pathways of dTTP synthesis. The protein is Thymidylate kinase of Synechococcus sp. (strain JA-3-3Ab) (Cyanobacteria bacterium Yellowstone A-Prime).